A 456-amino-acid chain; its full sequence is Probable tRNA(Ile)-lysidine synthase (456 aa).

30–35 serves as a coordination point for ATP; it reads SGGVDS.

It belongs to the tRNA(Ile)-lysidine synthase family.

Its subcellular location is the cytoplasm. The enzyme catalyses cytidine(34) in tRNA(Ile2) + L-lysine + ATP = lysidine(34) in tRNA(Ile2) + AMP + diphosphate + H(+). Ligates lysine onto the cytidine present at position 34 of the AUA codon-specific tRNA(Ile) that contains the anticodon CAU, in an ATP-dependent manner. Cytidine is converted to lysidine, thus changing the amino acid specificity of the tRNA from methionine to isoleucine. The sequence is that of Probable tRNA(Ile)-lysidine synthase from Schizosaccharomyces pombe (strain 972 / ATCC 24843) (Fission yeast).